Reading from the N-terminus, the 282-residue chain is Bicarbonate transport ATP-binding protein CmpD (282 aa).

Positions 24–257 constitute an ABC transporter domain; that stretch reads LTIENVSKVY…RPRDRDRIME (234 aa). 60–67 provides a ligand contact to ATP; that stretch reads GHSGCGKS.

It belongs to the ABC transporter superfamily. Nitrate/nitrite/cyanate uptake transporter (NitT) (TC 3.A.1.16) family. In terms of assembly, the complex is composed of two ATP-binding proteins (CmpC and CmpD), a transmembrane protein (CmpB) and a solute-binding protein (CmpA).

It localises to the cell inner membrane. Its function is as follows. Part of the ABC transporter complex CmpABCD involved in bicarbonate transport. Responsible for energy coupling to the transport system. The sequence is that of Bicarbonate transport ATP-binding protein CmpD (cmpD) from Synechocystis sp. (strain ATCC 27184 / PCC 6803 / Kazusa).